Reading from the N-terminus, the 939-residue chain is UvrABC system protein A (939 aa).

32–39 contacts ATP; it reads GLSGSGKS. The segment at 252–279 adopts a C4-type zinc-finger fold; it reads CPDCGISIGEISPSMFSFNAPFGKCDVC. ABC transporter domains follow at residues 309–588 and 608–936; these read WGEG…KESI and AGKN…QYLK. 640–647 is an ATP binding site; that stretch reads GVSGSGKS. The segment at 739 to 765 adopts a C4-type zinc-finger fold; sequence CEACKGDGIVRIEMQFLSDVYVPCDVC.

It belongs to the ABC transporter superfamily. UvrA family. In terms of assembly, forms a heterotetramer with UvrB during the search for lesions.

It localises to the cytoplasm. The UvrABC repair system catalyzes the recognition and processing of DNA lesions. UvrA is an ATPase and a DNA-binding protein. A damage recognition complex composed of 2 UvrA and 2 UvrB subunits scans DNA for abnormalities. When the presence of a lesion has been verified by UvrB, the UvrA molecules dissociate. The sequence is that of UvrABC system protein A from Clostridium acetobutylicum (strain ATCC 824 / DSM 792 / JCM 1419 / IAM 19013 / LMG 5710 / NBRC 13948 / NRRL B-527 / VKM B-1787 / 2291 / W).